Consider the following 65-residue polypeptide: Protein translocase subunit SecE (65 aa).

Residues I38–G58 form a helical membrane-spanning segment.

The protein belongs to the SecE/SEC61-gamma family. In terms of assembly, component of the Sec protein translocase complex. Heterotrimer consisting of SecY, SecE and SecG subunits. The heterotrimers can form oligomers, although 1 heterotrimer is thought to be able to translocate proteins. Interacts with the ribosome. Interacts with SecDF, and other proteins may be involved. Interacts with SecA.

It is found in the cell membrane. In terms of biological role, essential subunit of the Sec protein translocation channel SecYEG. Clamps together the 2 halves of SecY. May contact the channel plug during translocation. The sequence is that of Protein translocase subunit SecE from Staphylococcus carnosus (strain TM300).